A 621-amino-acid chain; its full sequence is Glutamyl-tRNA(Gln) amidotransferase subunit B, mitochondrial (621 aa).

A mitochondrion-targeting transit peptide spans Met-1 to Leu-41. Disordered stretches follow at residues Leu-26–Thr-86 and Ser-106–Asp-136. Low complexity-rich tracts occupy residues Leu-38–Pro-57 and Ser-110–Asp-120.

It belongs to the GatB/GatE family. GatB subfamily. Subunit of the heterotrimeric GatCAB amidotransferase (AdT) complex, composed of A, B and C subunits.

The protein resides in the mitochondrion. It carries out the reaction L-glutamyl-tRNA(Gln) + L-glutamine + ATP + H2O = L-glutaminyl-tRNA(Gln) + L-glutamate + ADP + phosphate + H(+). Functionally, allows the formation of correctly charged Gln-tRNA(Gln) through the transamidation of misacylated Glu-tRNA(Gln) in the mitochondria. The reaction takes place in the presence of glutamine and ATP through an activated gamma-phospho-Glu-tRNA(Gln). The chain is Glutamyl-tRNA(Gln) amidotransferase subunit B, mitochondrial from Podospora anserina (strain S / ATCC MYA-4624 / DSM 980 / FGSC 10383) (Pleurage anserina).